A 303-amino-acid polypeptide reads, in one-letter code: Ribosomal protein L11 methyltransferase (303 aa).

S-adenosyl-L-methionine-binding residues include threonine 144, glycine 165, aspartate 187, and asparagine 235.

The protein belongs to the methyltransferase superfamily. PrmA family.

Its subcellular location is the cytoplasm. It carries out the reaction L-lysyl-[protein] + 3 S-adenosyl-L-methionine = N(6),N(6),N(6)-trimethyl-L-lysyl-[protein] + 3 S-adenosyl-L-homocysteine + 3 H(+). In terms of biological role, methylates ribosomal protein L11. The protein is Ribosomal protein L11 methyltransferase of Prochlorococcus marinus (strain AS9601).